The chain runs to 187 residues: Ribosome-recycling factor (187 aa).

The protein belongs to the RRF family.

The protein localises to the cytoplasm. Responsible for the release of ribosomes from messenger RNA at the termination of protein biosynthesis. May increase the efficiency of translation by recycling ribosomes from one round of translation to another. This Orientia tsutsugamushi (strain Boryong) (Rickettsia tsutsugamushi) protein is Ribosome-recycling factor.